A 346-amino-acid polypeptide reads, in one-letter code: N-acetyl-gamma-glutamyl-phosphate reductase (346 aa).

The active site involves Cys151.

Belongs to the NAGSA dehydrogenase family. Type 1 subfamily.

The protein resides in the cytoplasm. It carries out the reaction N-acetyl-L-glutamate 5-semialdehyde + phosphate + NADP(+) = N-acetyl-L-glutamyl 5-phosphate + NADPH + H(+). Its pathway is amino-acid biosynthesis; L-arginine biosynthesis; N(2)-acetyl-L-ornithine from L-glutamate: step 3/4. In terms of biological role, catalyzes the NADPH-dependent reduction of N-acetyl-5-glutamyl phosphate to yield N-acetyl-L-glutamate 5-semialdehyde. This is N-acetyl-gamma-glutamyl-phosphate reductase from Ehrlichia chaffeensis (strain ATCC CRL-10679 / Arkansas).